The sequence spans 315 residues: Lipoyl synthase (315 aa).

[4Fe-4S] cluster is bound by residues Cys-63, Cys-68, Cys-74, Cys-89, Cys-93, Cys-96, and Ser-303. The 218-residue stretch at 75–292 (FSKGTATFMI…EEKAYEMGFV (218 aa)) folds into the Radical SAM core domain.

The protein belongs to the radical SAM superfamily. Lipoyl synthase family. [4Fe-4S] cluster is required as a cofactor.

It localises to the cytoplasm. The enzyme catalyses [[Fe-S] cluster scaffold protein carrying a second [4Fe-4S](2+) cluster] + N(6)-octanoyl-L-lysyl-[protein] + 2 oxidized [2Fe-2S]-[ferredoxin] + 2 S-adenosyl-L-methionine + 4 H(+) = [[Fe-S] cluster scaffold protein] + N(6)-[(R)-dihydrolipoyl]-L-lysyl-[protein] + 4 Fe(3+) + 2 hydrogen sulfide + 2 5'-deoxyadenosine + 2 L-methionine + 2 reduced [2Fe-2S]-[ferredoxin]. Its pathway is protein modification; protein lipoylation via endogenous pathway; protein N(6)-(lipoyl)lysine from octanoyl-[acyl-carrier-protein]: step 2/2. In terms of biological role, catalyzes the radical-mediated insertion of two sulfur atoms into the C-6 and C-8 positions of the octanoyl moiety bound to the lipoyl domains of lipoate-dependent enzymes, thereby converting the octanoylated domains into lipoylated derivatives. In Chromobacterium violaceum (strain ATCC 12472 / DSM 30191 / JCM 1249 / CCUG 213 / NBRC 12614 / NCIMB 9131 / NCTC 9757 / MK), this protein is Lipoyl synthase.